The sequence spans 281 residues: Probable feruloyl esterase A (281 aa).

The N-terminal stretch at 1-21 is a signal peptide; the sequence is MKNFFSMHAILLACSAGAGLA. 3 disulfide bridges follow: cysteine 50/cysteine 279, cysteine 112/cysteine 115, and cysteine 248/cysteine 255. Aspartate 98 is a binding site for substrate. Residue asparagine 100 is glycosylated (N-linked (GlcNAc...) asparagine). Tyrosine 101 contacts substrate. The active-site Nucleophile is serine 154. Asparagine 173 carries an N-linked (GlcNAc...) asparagine glycan. Residue aspartate 215 is the Charge relay system of the active site. Histidine 268 serves as a coordination point for substrate. Catalysis depends on histidine 268, which acts as the Charge relay system.

It belongs to the AB hydrolase superfamily. FaeA family.

The protein resides in the secreted. It catalyses the reaction feruloyl-polysaccharide + H2O = ferulate + polysaccharide.. Functionally, involved in degradation of plant cell walls. Hydrolyzes the feruloyl-arabinose ester bond in arabinoxylans, and the feruloyl-galactose ester bond in pectin. The chain is Probable feruloyl esterase A (faeA) from Aspergillus oryzae (strain ATCC 42149 / RIB 40) (Yellow koji mold).